The following is a 110-amino-acid chain: BolA-like protein 3 (110 aa).

Belongs to the BolA/IbaG family. In terms of assembly, interacts with NFU1.

It is found in the mitochondrion. Acts as a mitochondrial iron-sulfur (Fe-S) cluster assembly factor that facilitates (Fe-S) cluster insertion into a subset of mitochondrial proteins. Probably acts together with NFU1. This chain is BolA-like protein 3 (BOLA3), found in Bos taurus (Bovine).